Here is a 205-residue protein sequence, read N- to C-terminus: Urease accessory protein UreG (205 aa).

Residue 14 to 21 (GPVGSGKT) coordinates GTP.

This sequence belongs to the SIMIBI class G3E GTPase family. UreG subfamily. In terms of assembly, homodimer. UreD, UreF and UreG form a complex that acts as a GTP-hydrolysis-dependent molecular chaperone, activating the urease apoprotein by helping to assemble the nickel containing metallocenter of UreC. The UreE protein probably delivers the nickel.

The protein resides in the cytoplasm. Its function is as follows. Facilitates the functional incorporation of the urease nickel metallocenter. This process requires GTP hydrolysis, probably effectuated by UreG. This is Urease accessory protein UreG from Proteus mirabilis (strain HI4320).